Reading from the N-terminus, the 490-residue chain is Homoserine O-acetyltransferase (490 aa).

The 309-residue stretch at 47-355 folds into the AB hydrolase-1 domain; sequence NAILVCHALT…DYGHDAFLLE (309 aa). S152 acts as the Nucleophile in catalysis. R222 contributes to the substrate binding site. Active-site residues include D316 and H349. D350 lines the substrate pocket. 2 CBS domains span residues 376 to 436 and 437 to 490; these read MKTD…LEDV and MTKD…ISSY.

This sequence belongs to the AB hydrolase superfamily. MetX family. Homodimer.

It is found in the cytoplasm. The catalysed reaction is L-homoserine + acetyl-CoA = O-acetyl-L-homoserine + CoA. It participates in amino-acid biosynthesis; L-methionine biosynthesis via de novo pathway; O-acetyl-L-homoserine from L-homoserine: step 1/1. Its function is as follows. Transfers an acetyl group from acetyl-CoA to L-homoserine, forming acetyl-L-homoserine. This Methanobrevibacter ruminantium (strain ATCC 35063 / DSM 1093 / JCM 13430 / OCM 146 / M1) (Methanobacterium ruminantium) protein is Homoserine O-acetyltransferase.